Reading from the N-terminus, the 219-residue chain is Charged multivesicular body protein 5 (219 aa).

A coiled-coil region spans residues 22 to 153 (TNVDGRAESI…EIQEALSRSY (132 aa)).

Belongs to the SNF7 family. In terms of assembly, probable peripherally associated component of the endosomal sorting required for transport complex III (ESCRT-III).

It localises to the cytoplasm. It is found in the cytosol. Its subcellular location is the endosome membrane. Its function is as follows. Probable peripherally associated component of the endosomal sorting required for transport complex III (ESCRT-III) which is involved in multivesicular bodies (MVBs) formation and sorting of endosomal cargo proteins into MVBs. MVBs contain intraluminal vesicles (ILVs) that are generated by invagination and scission from the limiting membrane of the endosome and mostly are delivered to lysosomes enabling degradation of membrane proteins, such as stimulated growth factor receptors, lysosomal enzymes and lipids. This Xenopus laevis (African clawed frog) protein is Charged multivesicular body protein 5 (chmp5).